Here is a 283-residue protein sequence, read N- to C-terminus: Thymidylate synthase (283 aa).

Arginine 22 is a dUMP binding site. The active-site Nucleophile is the cysteine 160. DUMP is bound by residues 180–183 (RSCD), asparagine 191, and 221–223 (HIY). Position 183 (aspartate 183) interacts with (6R)-5,10-methylene-5,6,7,8-tetrahydrofolate. Residue serine 282 participates in (6R)-5,10-methylene-5,6,7,8-tetrahydrofolate binding.

It belongs to the thymidylate synthase family. Bacterial-type ThyA subfamily. In terms of assembly, homodimer.

Its subcellular location is the cytoplasm. The catalysed reaction is dUMP + (6R)-5,10-methylene-5,6,7,8-tetrahydrofolate = 7,8-dihydrofolate + dTMP. The protein operates within pyrimidine metabolism; dTTP biosynthesis. Its function is as follows. Catalyzes the reductive methylation of 2'-deoxyuridine-5'-monophosphate (dUMP) to 2'-deoxythymidine-5'-monophosphate (dTMP) while utilizing 5,10-methylenetetrahydrofolate (mTHF) as the methyl donor and reductant in the reaction, yielding dihydrofolate (DHF) as a by-product. This enzymatic reaction provides an intracellular de novo source of dTMP, an essential precursor for DNA biosynthesis. In Vibrio atlanticus (strain LGP32) (Vibrio splendidus (strain Mel32)), this protein is Thymidylate synthase.